The chain runs to 1227 residues: MVLAAAMSQDADPSGPEQPDRVACSVPGARASPAPSGPRGMQQPPPPPQPPPPPQAGLPQIIQNAAKLLDKNPFSVSNPNPLLPSPASLQLAQLQAQLTLHRLKLAQTAVTNNTAAATVLNQVLSKVAMSQPLFNQLRHPSVITGPHGHAGVPQHAAAIPSTRFPSNAIAFSPPSQTRGPGPSMNLPNQPPSAMVMHPFTGVMPQTPGQPAVILGIGKTGPAPATAGFYEYGKASSGQTYGPETDGQPGFLPSSASTSGSVTYEGHYSHTGQDGQAAFSKDFYGPNSQGSHVASGFPAEQAGGLKSEVGPLLQGTNSQWESPHGFSGQSKPDLTAGPMWPPPHNQPYELYDPEEPTSDRTPPSFGGRLNNSKQGFIGAGRRAKEDQALLSVRPLQAHELNDFHGVAPLHLPHICSICDKKVFDLKDWELHVKGKLHAQKCLVFSENAGIRCILGSAEGTLCASPNSTAVYNPAGNEDYASNLGTSYVPIPARSFTQSSPTFPLASVGTTFAQRKGAGRVVHICNLPEGSCTENDVINLGLPFGKVTNYILMKSTNQAFLEMAYTEAAQAMVQYYQEKSAVINGEKLLIRMSKRYKELQLKKPGKAVAAIIQDIHSQRERDMFREADRYGPERPRSRSPVSRSLSPRSHTPSFTSCSSSHSPPGPSRADWGNGRDSWEHSPYARREEERDPAPWRDNGDDKRDRMDPWAHDRKHHPRQLDKAELDERPEGGRPHREKYPRSGSPNLPHSVSSYKSREDGYYRKEPKAKSDKYLKQQQDAPGRSRRKDEARLRESRHPHPDDSGKEDGLGPKVTRAPEGAKAKQNEKNKTKRTDRDQEGADDRKENTMAENEAGKEEQEGMEESPQSVGRQEKEAEFSDPENTRTKKEQDWESESEAEGESWYPTNMEELVTVDEVGEEEDFIVEPDIPELEEIVPIDQKDKICPETCLCVTTTLDLDLAQDFPKEGVKAVGNGAAEISLKSPRELPSASTSCPSDMDVEMPGLNLDAERKPAESETGLSLEDSDCYEKEAKGVESSDVHPAPTVQQMSSPKPAEERARQPSPFVDDCKTRGTPEDGACEGSPLEEKASPPIETDLQNQACQEVLTPENSRYVEMKSLEVRSPEYTEVELKQPLSLPSWEPEDVFSELSIPLGVEFVVPRTGFYCKLCGLFYTSEETAKMSHCRSAVHYRNLQKYLSQLAEEGLKETEGADSPRPEDSGIVPRFERKKL.

2 disordered regions span residues 1 to 58 (MVLA…QAGL) and 289 to 374 (GSHV…SKQG). The span at 27–42 (PGARASPAPSGPRGMQ) shows a compositional bias: low complexity. Residues 43–56 (QPPPPPQPPPPPQA) are compositionally biased toward pro residues. Residues 313–331 (QGTNSQWESPHGFSGQSKP) are compositionally biased toward polar residues. The segment at 409–443 (HLPHICSICDKKVFDLKDWELHVKGKLHAQKCLVF) adopts a U1-type zinc-finger fold. S498 carries the phosphoserine modification. Positions 518–593 (RVVHICNLPE…EKLLIRMSKR (76 aa)) constitute an RRM domain. Residues 624–634 (EADRYGPERPR) are compositionally biased toward basic and acidic residues. Disordered regions lie at residues 624–906 (EADR…TNME) and 977–1089 (SLKS…ASPP). Positions 628 to 655 (YGPERPRSRSPVSRSLSPRSHTPSFTSC) are RS. Phosphoserine is present on residues S635, S637, S640, S642, S660, and S679. The span at 636 to 660 (RSPVSRSLSPRSHTPSFTSCSSSHS) shows a compositional bias: low complexity. Composition is skewed to basic and acidic residues over residues 674 to 709 (DSWE…PWAH) and 716 to 738 (RQLD…EKYP). Residues 741–752 (GSPNLPHSVSSY) show a composition bias toward polar residues. S742 bears the Phosphoserine mark. Basic and acidic residues-rich tracts occupy residues 753 to 772 (KSRE…DKYL), 784 to 807 (RKDE…EDGL), and 816 to 856 (EGAK…KEEQ). The residue at position 801 (S801) is a Phosphoserine. Phosphoserine occurs at positions 865, 876, 891, 893, 977, 980, and 1013. Residues 868–888 (RQEKEAEFSDPENTRTKKEQD) show a composition bias toward basic and acidic residues. The span at 1024–1036 (CYEKEAKGVESSD) shows a compositional bias: basic and acidic residues. A phosphoserine mark is found at S1048, S1060, S1080, S1115, and S1120. The Matrin-type zinc finger occupies 1161-1192 (FYCKLCGLFYTSEETAKMSHCRSAVHYRNLQK). Positions 1201-1215 (GLKETEGADSPRPED) are enriched in basic and acidic residues. Residues 1201 to 1227 (GLKETEGADSPRPEDSGIVPRFERKKL) are disordered. The residue at position 1210 (S1210) is a Phosphoserine.

Associates with components of the U1 and U2 U1 small nuclear ribonucleoprotein complexes. Phosphorylation regulates the subcellular localization. Phosphorylation of Ser-635 and Ser-637 in the RS (arginine/serine-rich) region promotes nuclear localization of the protein. In contrast, phosphorylation of the C-terminal disordered region promotes localization to cytoplasmic ribonucleoprotein granules. In terms of tissue distribution, mainly expressed in the heart. Also expressed in skeletal muscle tissues, ovary, small intestine and colon.

The protein localises to the nucleus. It is found in the cytoplasm. Its subcellular location is the cytoplasmic ribonucleoprotein granule. Its function is as follows. RNA-binding protein that acts as a regulator of mRNA splicing of a subset of genes encoding key structural proteins involved in cardiac development, such as TTN (Titin), CACNA1C, CAMK2D or PDLIM5/ENH. Acts as a repressor of mRNA splicing: specifically binds the 5'UCUU-3' motif that is predominantly found within intronic sequences of pre-mRNAs, leading to the exclusion of specific exons in target transcripts. RBM20-mediated exon skipping is hormone-dependent and is essential for TTN isoform transition in both cardiac and skeletal muscles. RBM20-mediated exon skipping of TTN provides substrates for the formation of circular RNA (circRNAs) from the TTN transcripts. Together with RBM24, promotes the expression of short isoforms of PDLIM5/ENH in cardiomyocytes. The chain is RNA-binding protein 20 from Homo sapiens (Human).